Consider the following 65-residue polypeptide: Large ribosomal subunit protein bL32 (65 aa).

This sequence belongs to the bacterial ribosomal protein bL32 family.

The polypeptide is Large ribosomal subunit protein bL32 (Tropheryma whipplei (strain TW08/27) (Whipple's bacillus)).